A 527-amino-acid chain; its full sequence is Glucose-6-phosphate isomerase (527 aa).

The Proton donor role is filled by E347. Active-site residues include H378 and K493.

The protein belongs to the GPI family.

Its subcellular location is the cytoplasm. It catalyses the reaction alpha-D-glucose 6-phosphate = beta-D-fructose 6-phosphate. Its pathway is carbohydrate biosynthesis; gluconeogenesis. The protein operates within carbohydrate degradation; glycolysis; D-glyceraldehyde 3-phosphate and glycerone phosphate from D-glucose: step 2/4. Its function is as follows. Catalyzes the reversible isomerization of glucose-6-phosphate to fructose-6-phosphate. The sequence is that of Glucose-6-phosphate isomerase from Chlamydia caviae (strain ATCC VR-813 / DSM 19441 / 03DC25 / GPIC) (Chlamydophila caviae).